Here is a 164-residue protein sequence, read N- to C-terminus: UPF0114 protein YqhA (164 aa).

Helical transmembrane passes span 15–35 (LLAP…LKFF), 53–73 (LILV…LVMV), and 136–156 (LMWY…MGYL).

It belongs to the UPF0114 family.

The protein resides in the cell membrane. This is UPF0114 protein YqhA from Escherichia coli O139:H28 (strain E24377A / ETEC).